Reading from the N-terminus, the 358-residue chain is Methylthioribose-1-phosphate isomerase (358 aa).

Substrate is bound by residues 54 to 56 (RGA), arginine 96, and glutamine 205. Residue aspartate 246 is the Proton donor of the active site. 256-257 (NK) contacts substrate.

It belongs to the eIF-2B alpha/beta/delta subunits family. MtnA subfamily.

The enzyme catalyses 5-(methylsulfanyl)-alpha-D-ribose 1-phosphate = 5-(methylsulfanyl)-D-ribulose 1-phosphate. Its pathway is amino-acid biosynthesis; L-methionine biosynthesis via salvage pathway; L-methionine from S-methyl-5-thio-alpha-D-ribose 1-phosphate: step 1/6. Functionally, catalyzes the interconversion of methylthioribose-1-phosphate (MTR-1-P) into methylthioribulose-1-phosphate (MTRu-1-P). The polypeptide is Methylthioribose-1-phosphate isomerase (Pseudomonas savastanoi pv. phaseolicola (strain 1448A / Race 6) (Pseudomonas syringae pv. phaseolicola (strain 1448A / Race 6))).